A 446-amino-acid chain; its full sequence is Tubulin beta chain (446 aa).

The GTP site is built by Gln11, Glu69, Ser138, Gly142, Thr143, Gly144, Asn204, and Asn226. Glu69 is a Mg(2+) binding site. The segment at 421–446 (EYQQYQDAGIDEEEEEYEEELPEGEE) is disordered. Residues 429 to 446 (GIDEEEEEYEEELPEGEE) show a composition bias toward acidic residues.

It belongs to the tubulin family. As to quaternary structure, dimer of alpha and beta chains. A typical microtubule is a hollow water-filled tube with an outer diameter of 25 nm and an inner diameter of 15 nM. Alpha-beta heterodimers associate head-to-tail to form protofilaments running lengthwise along the microtubule wall with the beta-tubulin subunit facing the microtubule plus end conferring a structural polarity. Microtubules usually have 13 protofilaments but different protofilament numbers can be found in some organisms and specialized cells. Mg(2+) serves as cofactor.

It is found in the cytoplasm. The protein resides in the cytoskeleton. Its function is as follows. Tubulin is the major constituent of microtubules, a cylinder consisting of laterally associated linear protofilaments composed of alpha- and beta-tubulin heterodimers. Microtubules grow by the addition of GTP-tubulin dimers to the microtubule end, where a stabilizing cap forms. Below the cap, tubulin dimers are in GDP-bound state, owing to GTPase activity of alpha-tubulin. The protein is Tubulin beta chain (TUB2) of Fusarium fujikuroi (Bakanae and foot rot disease fungus).